The chain runs to 98 residues: NADH-ubiquinone oxidoreductase chain 4L (98 aa).

A run of 3 helical transmembrane segments spans residues 1–21 (MSMV…GLLM), 29–49 (SLLC…VTIL), and 61–81 (IILL…LVMV).

It belongs to the complex I subunit 4L family. Core subunit of respiratory chain NADH dehydrogenase (Complex I) which is composed of 45 different subunits.

It localises to the mitochondrion inner membrane. The catalysed reaction is a ubiquinone + NADH + 5 H(+)(in) = a ubiquinol + NAD(+) + 4 H(+)(out). In terms of biological role, core subunit of the mitochondrial membrane respiratory chain NADH dehydrogenase (Complex I) which catalyzes electron transfer from NADH through the respiratory chain, using ubiquinone as an electron acceptor. Part of the enzyme membrane arm which is embedded in the lipid bilayer and involved in proton translocation. This chain is NADH-ubiquinone oxidoreductase chain 4L (MT-ND4L), found in Erignathus barbatus (Bearded seal).